A 131-amino-acid chain; its full sequence is Small ribosomal subunit protein uS8 (131 aa).

It belongs to the universal ribosomal protein uS8 family. As to quaternary structure, part of the 30S ribosomal subunit. Contacts proteins S5 and S12.

Its function is as follows. One of the primary rRNA binding proteins, it binds directly to 16S rRNA central domain where it helps coordinate assembly of the platform of the 30S subunit. This Solibacter usitatus (strain Ellin6076) protein is Small ribosomal subunit protein uS8.